A 232-amino-acid chain; its full sequence is uncharacterized protein (232 aa).

This is an uncharacterized protein from Eriophyes pyri (pearleaf blister mite).